The sequence spans 322 residues: Phosphatidylserine decarboxylase proenzyme (322 aa).

Active-site charge relay system; for autoendoproteolytic cleavage activity residues include D90, H147, and S254. The active-site Schiff-base intermediate with substrate; via pyruvic acid; for decarboxylase activity is the S254. At S254 the chain carries Pyruvic acid (Ser); by autocatalysis. Residues 292–322 (TPDAEPSPLPAEEIEAEHDASPLVDDKKDQV) are disordered. Residues 308–322 (EHDASPLVDDKKDQV) are compositionally biased toward basic and acidic residues.

Belongs to the phosphatidylserine decarboxylase family. PSD-B subfamily. Prokaryotic type I sub-subfamily. In terms of assembly, heterodimer of a large membrane-associated beta subunit and a small pyruvoyl-containing alpha subunit. The cofactor is pyruvate. In terms of processing, is synthesized initially as an inactive proenzyme. Formation of the active enzyme involves a self-maturation process in which the active site pyruvoyl group is generated from an internal serine residue via an autocatalytic post-translational modification. Two non-identical subunits are generated from the proenzyme in this reaction, and the pyruvate is formed at the N-terminus of the alpha chain, which is derived from the carboxyl end of the proenzyme. The autoendoproteolytic cleavage occurs by a canonical serine protease mechanism, in which the side chain hydroxyl group of the serine supplies its oxygen atom to form the C-terminus of the beta chain, while the remainder of the serine residue undergoes an oxidative deamination to produce ammonia and the pyruvoyl prosthetic group on the alpha chain. During this reaction, the Ser that is part of the protease active site of the proenzyme becomes the pyruvoyl prosthetic group, which constitutes an essential element of the active site of the mature decarboxylase.

It is found in the cell membrane. It catalyses the reaction a 1,2-diacyl-sn-glycero-3-phospho-L-serine + H(+) = a 1,2-diacyl-sn-glycero-3-phosphoethanolamine + CO2. Its pathway is phospholipid metabolism; phosphatidylethanolamine biosynthesis; phosphatidylethanolamine from CDP-diacylglycerol: step 2/2. Functionally, catalyzes the formation of phosphatidylethanolamine (PtdEtn) from phosphatidylserine (PtdSer). The chain is Phosphatidylserine decarboxylase proenzyme from Escherichia coli O7:K1 (strain IAI39 / ExPEC).